Consider the following 191-residue polypeptide: Glycerol-3-phosphate acyltransferase (191 aa).

6 helical membrane passes run 7–27 (ILVLSYLIGSIPFGLILSYIG), 51–71 (KLAVVTLILDSLKGFVSVMLA), 80–100 (FVFMSALFSIIGHMFPVWLSF), 115–135 (FIEYKFVIYFTIFWIIVFVIF), 139–159 (SLSSIISTISIMLLVYTHYSA), and 161–181 (ESITFLVMSLLVIVQHIENIV).

It belongs to the PlsY family. Probably interacts with PlsX.

Its subcellular location is the cell inner membrane. It catalyses the reaction an acyl phosphate + sn-glycerol 3-phosphate = a 1-acyl-sn-glycero-3-phosphate + phosphate. It functions in the pathway lipid metabolism; phospholipid metabolism. Catalyzes the transfer of an acyl group from acyl-phosphate (acyl-PO(4)) to glycerol-3-phosphate (G3P) to form lysophosphatidic acid (LPA). This enzyme utilizes acyl-phosphate as fatty acyl donor, but not acyl-CoA or acyl-ACP. In Ehrlichia canis (strain Jake), this protein is Glycerol-3-phosphate acyltransferase.